The following is a 189-amino-acid chain: Glycerol-3-phosphate acyltransferase 1 (189 aa).

Transmembrane regions (helical) follow at residues 12–32 (MQFL…AYIV), 61–81 (GYFV…VSIA), 88–108 (FTFV…PMLF), 124–144 (IAFD…FYLI), and 164–184 (ILYS…VLIL).

This sequence belongs to the PlsY family. As to quaternary structure, probably interacts with PlsX.

It localises to the cell membrane. The catalysed reaction is an acyl phosphate + sn-glycerol 3-phosphate = a 1-acyl-sn-glycero-3-phosphate + phosphate. The protein operates within lipid metabolism; phospholipid metabolism. Functionally, catalyzes the transfer of an acyl group from acyl-phosphate (acyl-PO(4)) to glycerol-3-phosphate (G3P) to form lysophosphatidic acid (LPA). This enzyme utilizes acyl-phosphate as fatty acyl donor, but not acyl-CoA or acyl-ACP. In Bacillus anthracis, this protein is Glycerol-3-phosphate acyltransferase 1.